Consider the following 1067-residue polypeptide: Dorsal-ventral patterning protein tolloid (1067 aa).

An N-terminal signal peptide occupies residues 1 to 36; the sequence is MKGMRLMPMKMKAKLVVLSVGALWMMMFFLVDYAEG. Residues 37 to 136 constitute a propeptide that is removed on maturation; sequence RRLSQLPESE…NGQPIQRRRR (100 aa). A Peptidase M12A domain is found at 136 to 338; the sequence is RAVTVRKERT…VQANLLYKCA (203 aa). An N-linked (GlcNAc...) asparagine glycan is attached at asparagine 176. Disulfide bonds link cysteine 179–cysteine 337, cysteine 201–cysteine 223, cysteine 203–cysteine 204, cysteine 340–cysteine 390, and cysteine 417–cysteine 439. Histidine 231 contacts Zn(2+). The active site involves glutamate 232. Residues histidine 235 and histidine 241 each coordinate Zn(2+). Short sequence motifs (cell attachment site) lie at residues 245 to 247 and 325 to 327; these read RGD. CUB domains lie at 340–477 and 478–591; these read CGRT…FEVV and CGGD…LMLD. Residue asparagine 441 is glycosylated (N-linked (GlcNAc...) asparagine). 6 cysteine pairs are disulfide-bonded: cysteine 478-cysteine 505, cysteine 532-cysteine 554, cysteine 595-cysteine 606, cysteine 602-cysteine 615, cysteine 617-cysteine 630, and cysteine 634-cysteine 662. Asparagine 543 carries an N-linked (GlcNAc...) asparagine glycan. The 41-residue stretch at 591–631 folds into the EGF-like 1; calcium-binding domain; it reads DVDECKFTDHGCQHLCINTLGSYQCGCRAGYELQANGKTCE. The 120-residue stretch at 634–753 folds into the CUB 3 domain; the sequence is CGGVVDATKS…SGFVAKFVID (120 aa). 2 N-linked (GlcNAc...) asparagine glycosylation sites follow: asparagine 644 and asparagine 677. 8 disulfides stabilise this stretch: cysteine 693/cysteine 716, cysteine 757/cysteine 768, cysteine 764/cysteine 777, cysteine 779/cysteine 792, cysteine 797/cysteine 823, cysteine 850/cysteine 872, cysteine 910/cysteine 940, and cysteine 967/cysteine 989. Residues 753-793 enclose the EGF-like 2; calcium-binding domain; sequence DVDECSMNNGGCQHRCRNTFGSYQCSCRNGYTLAENGHNCT. N-linked (GlcNAc...) asparagine glycosylation occurs at asparagine 791. CUB domains lie at 797–909 and 910–1026; these read CKFE…FVSE and CGGY…FMAV. N-linked (GlcNAc...) asparagine glycosylation is found at asparagine 864 and asparagine 918.

Requires Zn(2+) as cofactor.

In terms of biological role, metalloprotease which cleaves TGF-beta family ligands daw, Actbeta and myo in vitro. Cleavage of daw enhances its signaling activity. Cleaves dorsal-ventral patterning protein sog. Processes sog more efficiently than metalloprotease tld which also cleaves sog. Required for normal dorsal development. TLD may interact physically with DPP-C protein. The protein is Dorsal-ventral patterning protein tolloid (tld) of Drosophila melanogaster (Fruit fly).